Reading from the N-terminus, the 693-residue chain is Glycine--tRNA ligase beta subunit (693 aa).

The protein belongs to the class-II aminoacyl-tRNA synthetase family. In terms of assembly, tetramer of two alpha and two beta subunits.

It is found in the cytoplasm. The enzyme catalyses tRNA(Gly) + glycine + ATP = glycyl-tRNA(Gly) + AMP + diphosphate. This is Glycine--tRNA ligase beta subunit (glyS) from Halalkalibacterium halodurans (strain ATCC BAA-125 / DSM 18197 / FERM 7344 / JCM 9153 / C-125) (Bacillus halodurans).